The following is a 155-amino-acid chain: Myosin light chain alkali (155 aa).

2 EF-hand domains span residues 7–41 (REIE…LNLN) and 80–115 (GCYE…LGES).

Myosin is a hexamer of 2 heavy chains and 4 light chains.

In Drosophila pseudoobscura pseudoobscura (Fruit fly), this protein is Myosin light chain alkali (Mlc1).